The primary structure comprises 901 residues: Protein translocase subunit SecA (901 aa).

ATP is bound by residues Gln-85, 103-107 (GEGKT), and Asp-510. Positions 836 to 845 (EEAERARQEM) are enriched in basic and acidic residues. Residues 836-901 (EEAERARQEM…HCHGSRVARQ (66 aa)) form a disordered region. Over residues 849–866 (INQNNLPVDENSQTTQNS) the composition is skewed to polar residues. Zn(2+) is bound by residues Cys-882, Cys-884, Cys-893, and His-894. The span at 888–901 (KKYKHCHGSRVARQ) shows a compositional bias: basic residues.

It belongs to the SecA family. Monomer and homodimer. Part of the essential Sec protein translocation apparatus which comprises SecA, SecYEG and auxiliary proteins SecDF-YajC and YidC. It depends on Zn(2+) as a cofactor.

Its subcellular location is the cell inner membrane. It localises to the cytoplasm. The enzyme catalyses ATP + H2O + cellular proteinSide 1 = ADP + phosphate + cellular proteinSide 2.. Functionally, part of the Sec protein translocase complex. Interacts with the SecYEG preprotein conducting channel. Has a central role in coupling the hydrolysis of ATP to the transfer of proteins into and across the cell membrane, serving both as a receptor for the preprotein-SecB complex and as an ATP-driven molecular motor driving the stepwise translocation of polypeptide chains across the membrane. The chain is Protein translocase subunit SecA from Haemophilus influenzae (strain PittEE).